A 313-amino-acid chain; its full sequence is Fe-S cluster assembly protein DRE2 (313 aa).

The interval 1–184 (MTLRILLLLH…KKLLDRSNEV (184 aa)) is N-terminal SAM-like domain. Over residues 134-144 (NITSNSNNNDS) the composition is skewed to low complexity. Disordered regions lie at residues 134–155 (NITS…NNTG), 187–254 (NLAS…QEDN), and 271–313 (NLII…RQSG). The interval 185 to 270 (KGNLASGTVK…NDLISELKSD (86 aa)) is linker. Polar residues predominate over residues 189–207 (ASGTVKSPSPGLTDTSAQN). Positions 233–254 (SDSDNNEGRDLDDDDDDGQEDN) are enriched in acidic residues.

This sequence belongs to the anamorsin family. As to quaternary structure, monomer. Interacts with TAH18. Interacts with MIA40.

It is found in the cytoplasm. The protein resides in the mitochondrion intermembrane space. Functionally, component of the cytosolic iron-sulfur (Fe-S) protein assembly (CIA) machinery required for the maturation of extramitochondrial Fe-S proteins. Part of an electron transfer chain functioning in an early step of cytosolic Fe-S biogenesis, facilitating the de novo assembly of a [4Fe-4S] cluster on the scaffold complex CFD1-NBP35. Electrons are transferred to DRE2 from NADPH via the FAD- and FMN-containing protein TAH18. TAH18-DRE2 are also required for the assembly of the diferric tyrosyl radical cofactor of ribonucleotide reductase (RNR), probably by providing electrons for reduction during radical cofactor maturation in the catalytic small subunit RNR2. The polypeptide is Fe-S cluster assembly protein DRE2 (DRE2) (Lodderomyces elongisporus (strain ATCC 11503 / CBS 2605 / JCM 1781 / NBRC 1676 / NRRL YB-4239) (Yeast)).